We begin with the raw amino-acid sequence, 270 residues long: MQCWIRQTINFFRKTKNTEKLTALLQQKEDILAVEIPVSLVYNGISHAVMMCSPNNLEDFALGFSLTEGIINKPEDIYGIDVVEVCNGIEVQIELSSRKFMALKEHRRNLTGRTGCGICGTEQLNQVYKTFPKLDCTFQFDLNLLDSCLIDLQKNQLLGCKTGATHACAFFDLYGSMLAIYEDVGRHVALDKLLGWHAKSGKPRGFILASSRASYEMVQKTVACGVEMLVTISAATDLAVTMAEKHNLTLIGFAREGKGNIYSGHLRLHN.

The Cysteine persulfide intermediate role is filled by cysteine 116. 253 to 258 serves as a coordination point for Mo-bis(molybdopterin guanine dinucleotide); sequence FAREGK.

The protein belongs to the FdhD family.

It is found in the cytoplasm. Its function is as follows. Required for formate dehydrogenase (FDH) activity. Acts as a sulfur carrier protein that transfers sulfur from IscS to the molybdenum cofactor prior to its insertion into FDH. This chain is Sulfur carrier protein FdhD, found in Haemophilus influenzae (strain ATCC 51907 / DSM 11121 / KW20 / Rd).